The chain runs to 398 residues: S-adenosylmethionine synthase (398 aa).

Position 26 (H26) interacts with ATP. D28 is a Mg(2+) binding site. E54 is a binding site for K(+). L-methionine contacts are provided by E67 and Q110. The tract at residues 110–120 (QSPDIAQGVNE) is flexible loop. ATP contacts are provided by residues 177–179 (DAK), 243–244 (RF), D252, 258–259 (RK), A275, and K279. Residue D252 coordinates L-methionine. An L-methionine-binding site is contributed by K283.

It belongs to the AdoMet synthase family. As to quaternary structure, homotetramer; dimer of dimers. Mg(2+) is required as a cofactor. Requires K(+) as cofactor.

The protein resides in the cytoplasm. It carries out the reaction L-methionine + ATP + H2O = S-adenosyl-L-methionine + phosphate + diphosphate. It functions in the pathway amino-acid biosynthesis; S-adenosyl-L-methionine biosynthesis; S-adenosyl-L-methionine from L-methionine: step 1/1. Catalyzes the formation of S-adenosylmethionine (AdoMet) from methionine and ATP. The overall synthetic reaction is composed of two sequential steps, AdoMet formation and the subsequent tripolyphosphate hydrolysis which occurs prior to release of AdoMet from the enzyme. The protein is S-adenosylmethionine synthase of Desulfotalea psychrophila (strain LSv54 / DSM 12343).